The sequence spans 209 residues: Putative 3-methyladenine DNA glycosylase (209 aa).

Residues 189–209 (HVSTTRLGAPKKKRQKRLERR) form a disordered region. Over residues 197–209 (APKKKRQKRLERR) the composition is skewed to basic residues.

It belongs to the DNA glycosylase MPG family.

This Chlorobaculum parvum (strain DSM 263 / NCIMB 8327) (Chlorobium vibrioforme subsp. thiosulfatophilum) protein is Putative 3-methyladenine DNA glycosylase.